The chain runs to 68 residues: MDQVTKFIEPGRQFAKDSIRLVKRCTKPDRKEFQKIAVATAIGFCIMGFIGFFVKLIHIPINNIIVGS.

Residues 1-32 (MDQVTKFIEPGRQFAKDSIRLVKRCTKPDRKE) are Cytoplasmic-facing. A helical transmembrane segment spans residues 33–61 (FQKIAVATAIGFCIMGFIGFFVKLIHIPI). The Extracellular portion of the chain corresponds to 62–68 (NNIIVGS).

This sequence belongs to the SecE/SEC61-gamma family. Heterotrimeric complex composed of SEC61-alpha, SEC61-beta and SEC61-gamma.

The protein resides in the endoplasmic reticulum membrane. Necessary for protein translocation in the endoplasmic reticulum. In Gryllotalpa orientalis (Oriental mole cricket), this protein is Protein transport protein Sec61 subunit gamma (SEC61G).